A 314-amino-acid polypeptide reads, in one-letter code: 3'-5' exoribonuclease YhaM (314 aa).

One can recognise an HD domain in the interval 163–279 (HVVSMLDLAK…LHYIDNLDAK (117 aa)).

It belongs to the YhaM family.

Functionally, shows a 3'-5' exoribonuclease activity. This is 3'-5' exoribonuclease YhaM from Bacillus cereus (strain 03BB102).